The primary structure comprises 233 residues: MAKLTKRARLIREKVEATKSYDINEAVALLKELATAKFVESVDVAVNLGVDPRKSDQNVRGATVLPHGTGREVRVAVFTQGANADAAKEAGAELVGMDELAAQVKAGEMNFDVVIASPDAMRVVGQLGQILGPRGLMPNPKTGTVTPNVAEAVKNAKAGQVRYRNDKNGIIHTTIGKVDFEPVQLKENLDALLGALIKAKPAAAKGVFVKKVSISTTMGAGVAVDQSTLNPTA.

Belongs to the universal ribosomal protein uL1 family. As to quaternary structure, part of the 50S ribosomal subunit.

Functionally, binds directly to 23S rRNA. The L1 stalk is quite mobile in the ribosome, and is involved in E site tRNA release. Protein L1 is also a translational repressor protein, it controls the translation of the L11 operon by binding to its mRNA. This chain is Large ribosomal subunit protein uL1, found in Shewanella loihica (strain ATCC BAA-1088 / PV-4).